Consider the following 578-residue polypeptide: Proline--tRNA ligase (578 aa).

This sequence belongs to the class-II aminoacyl-tRNA synthetase family. ProS type 1 subfamily. As to quaternary structure, homodimer.

Its subcellular location is the cytoplasm. It catalyses the reaction tRNA(Pro) + L-proline + ATP = L-prolyl-tRNA(Pro) + AMP + diphosphate. Catalyzes the attachment of proline to tRNA(Pro) in a two-step reaction: proline is first activated by ATP to form Pro-AMP and then transferred to the acceptor end of tRNA(Pro). As ProRS can inadvertently accommodate and process non-cognate amino acids such as alanine and cysteine, to avoid such errors it has two additional distinct editing activities against alanine. One activity is designated as 'pretransfer' editing and involves the tRNA(Pro)-independent hydrolysis of activated Ala-AMP. The other activity is designated 'posttransfer' editing and involves deacylation of mischarged Ala-tRNA(Pro). The misacylated Cys-tRNA(Pro) is not edited by ProRS. This Burkholderia mallei (strain ATCC 23344) protein is Proline--tRNA ligase.